Reading from the N-terminus, the 185-residue chain is Fimbrial subunit type 1 (185 aa).

The N-terminal stretch at 1 to 22 is a signal peptide; that stretch reads MRHKLMTSTIASLMFVAAAAVA. Cysteine 46 and cysteine 86 form a disulfide bridge.

This sequence belongs to the fimbrial protein family.

It localises to the fimbrium. This chain is Fimbrial subunit type 1, found in Salmonella typhimurium.